The primary structure comprises 899 residues: Protein translocase subunit SecA (899 aa).

ATP is bound by residues glutamine 87, 105–109 (GEGKT), and aspartate 512. The interval 846–899 (MEEEQQQQAQKKIVFNLGEEPATAPQPARSKKSASRNDPCPCGSGKKYKKCCGK) is disordered. Positions 885, 887, 896, and 897 each coordinate Zn(2+).

It belongs to the SecA family. Monomer and homodimer. Part of the essential Sec protein translocation apparatus which comprises SecA, SecYEG and auxiliary proteins SecDF-YajC and YidC. Requires Zn(2+) as cofactor.

It localises to the cell inner membrane. The protein localises to the cytoplasm. It catalyses the reaction ATP + H2O + cellular proteinSide 1 = ADP + phosphate + cellular proteinSide 2.. Functionally, part of the Sec protein translocase complex. Interacts with the SecYEG preprotein conducting channel. Has a central role in coupling the hydrolysis of ATP to the transfer of proteins into and across the cell membrane, serving as an ATP-driven molecular motor driving the stepwise translocation of polypeptide chains across the membrane. This Geobacter metallireducens (strain ATCC 53774 / DSM 7210 / GS-15) protein is Protein translocase subunit SecA.